Consider the following 399-residue polypeptide: S-adenosylmethionine synthase (399 aa).

Position 15 (H15) interacts with ATP. Residue D17 participates in Mg(2+) binding. E43 is a K(+) binding site. L-methionine is bound by residues E56 and Q99. A flexible loop region spans residues 99–109 (QSADIAQGVDN). ATP-binding positions include 174–176 (DGK), 244–245 (RF), D253, 259–260 (RK), A276, and K280. Position 253 (D253) interacts with L-methionine. K284 serves as a coordination point for L-methionine.

The protein belongs to the AdoMet synthase family. In terms of assembly, homotetramer; dimer of dimers. It depends on Mg(2+) as a cofactor. Requires K(+) as cofactor.

It localises to the cytoplasm. It carries out the reaction L-methionine + ATP + H2O = S-adenosyl-L-methionine + phosphate + diphosphate. Its pathway is amino-acid biosynthesis; S-adenosyl-L-methionine biosynthesis; S-adenosyl-L-methionine from L-methionine: step 1/1. Functionally, catalyzes the formation of S-adenosylmethionine (AdoMet) from methionine and ATP. The overall synthetic reaction is composed of two sequential steps, AdoMet formation and the subsequent tripolyphosphate hydrolysis which occurs prior to release of AdoMet from the enzyme. This chain is S-adenosylmethionine synthase, found in Salinispora arenicola (strain CNS-205).